Reading from the N-terminus, the 208-residue chain is Large ribosomal subunit protein bL25 (208 aa).

It belongs to the bacterial ribosomal protein bL25 family. CTC subfamily. In terms of assembly, part of the 50S ribosomal subunit; part of the 5S rRNA/L5/L18/L25 subcomplex. Contacts the 5S rRNA. Binds to the 5S rRNA independently of L5 and L18.

In terms of biological role, this is one of the proteins that binds to the 5S RNA in the ribosome where it forms part of the central protuberance. The chain is Large ribosomal subunit protein bL25 from Bordetella pertussis (strain Tohama I / ATCC BAA-589 / NCTC 13251).